Here is a 118-residue protein sequence, read N- to C-terminus: DNA mimic protein DMP12 (118 aa).

The protein belongs to the DMP12-like protein family. As to quaternary structure, monomer. Interacts with the dimeric form of the DNA-binding protein HU.

Its function is as follows. Acts as a DNA mimic. Interacts with the DNA-binding protein HU and partially prevents the binding of HU protein to DNA by occupying the DNA binding sites on the protein. However, the relatively weak affinity of DMP12 for HU suggests that it may not completely block the HU protein-DNA binding, and that DMP12 is more likely to act as a regulator than a competitive inhibitor. It protects HU protein from limited digestion by trypsin in a limited trypsin digestion assay, suggesting that it may serve to protect the HU protein and improve the stability of unbound HU protein. The sequence is that of DNA mimic protein DMP12 from Neisseria meningitidis serogroup B (strain ATCC BAA-335 / MC58).